Here is a 514-residue protein sequence, read N- to C-terminus: Developmental and secondary metabolism regulator veA (514 aa).

Residues 26-218 (NRHLWYQLTV…ADQGCHVRIR (193 aa)) enclose the Velvet domain. The Nuclear localization signal signature appears at 40–45 (ERARAC). The interval 219 to 463 (RDVRMRKRDA…PIGSKRKHDQ (245 aa)) is disordered. A compositionally biased stretch (basic and acidic residues) spans 228 to 243 (AKSNNGRDRREDDMAR). Residues 256-267 (SAAARARSMSNS) are compositionally biased toward low complexity. Over residues 386 to 396 (SYPSTPVSSHP) the composition is skewed to polar residues. The PEST stretch occupies residues 411–448 (KSPSNSVSPSNSSLKITDLLVQPLPSSEPKLEVGSAPC). Over residues 412-423 (SPSNSVSPSNSS) the composition is skewed to low complexity.

This sequence belongs to the velvet family. VeA subfamily. Component of the heterotrimeric velvet complex composed of laeA, veA and velB; VeA acting as a bridging protein between laeA and velB.

It localises to the nucleus. The protein resides in the cytoplasm. Its function is as follows. Component of the velvet transcription factor complex that controls sexual/asexual developmental ratio in response to light, promoting sexual development in the darkness while stimulating asexual sporulation under illumination. The velvet complex hat acts as a global regulator for secondary metabolite gene expression. Controls the expression of the cephalosporin C gene cluster. Regulates hyphal fragmentation. This chain is Developmental and secondary metabolism regulator veA, found in Hapsidospora chrysogenum (strain ATCC 11550 / CBS 779.69 / DSM 880 / IAM 14645 / JCM 23072 / IMI 49137) (Acremonium chrysogenum).